The sequence spans 580 residues: Viral transcription factor IE2 (580 aa).

The segment covering 1 to 11 has biased composition (basic and acidic residues); it reads MESSAKRKMDP. Disordered stretches follow at residues 1 to 30 and 99 to 161; these read MESS…TPVT and DSSS…VIIK. Residues 99-133 show a composition bias toward polar residues; that stretch reads DSSSTGPTLTTHSCSVSSAPLNKPTPTSVAVTNTP. Residues Lys-175 and Lys-180 each participate in a glycyl lysine isopeptide (Lys-Gly) (interchain with G-Cter in SUMO) cross-link. Residues 199–202 carry the SUMO-interacting motif 1/SIM1 motif; the sequence is CIVI. Residues 200 to 208 are non-covalent SUMO1 binding region (SIM); sequence IVISDSEEE. 2 positions are modified to phosphoserine: Ser-203 and Ser-205. The interval 206 to 336 is disordered; sequence EEEQGEEVET…SKRISELDNE (131 aa). Composition is skewed to low complexity over residues 216–236, 259–271, and 302–317; these read RGAT…TSPT, SSSS…SASD, and AASS…SSGG. The SUMO-interacting motif 1/SIM2 signature appears at 410–413; it reads IQII. Positions 501 to 504 match the SUMO-interacting motif 1/SIM3 motif; it reads VDLL.

It belongs to the HHV-5 IE2 protein family. Interacts with host SUMO-modified form of TATA-binding protein (TBP)-associated factor 12/TAF12 in a SIM-dependent manner; this interaction increases the transactivation activity of IE2. Interacts with host CHAF1A. Interacts with several components of the host transcriptional machinery including TBP, TF2B and CREB1. Interacts with host DNA replication licensing factor MCM3. Interacts with host PLSCR1; this interaction inhibits IE2 transactivating activity. Phosphorylated by host CK2 at Ser-203 and Ser-205; leading to enhanced SUMOylation. Post-translationally, SUMOylated; SUMOylation is enhanced when IE2 is phosphorylated by host CK2. The sumoylation is necessary for efficient replication of the virus and thus for the function of this viral transcription factor.

The protein resides in the host nucleus. Functionally, stimulates viral early and late gene expression and thus play a crucial role in the regulation of productive infection. Selectively drives host RNA Pol II transcription initiation at a subset of viral early-late and late promoters without substantially affecting Pol II transcription of expressed host genes. Mechanistically, forms a repressive complex at the major immediate-early promoter region involving direct association with host nucleosomes and TBP. Concerning activation, stimulates transcription by binding nearby, but not within, core promoter regions. In addition, activates quiescent cells to reenter the cell cycle and up-regulates several E2F-responsive genes, which are responsible for pushing the cell into S phase. In S-phase, inhibits cellular DNA synthesis and blocks further cell cycle progression. The chain is Viral transcription factor IE2 (UL122) from Homo sapiens (Human).